We begin with the raw amino-acid sequence, 127 residues long: Evasin-4 (127 aa).

The signal sequence occupies residues 1-23 (MAFKYWFVFAAVLYARQWLSTKC). 4 disulfide bridges follow: Cys-50/Cys-69, Cys-65/Cys-112, Cys-86/Cys-117, and Cys-107/Cys-126. Residues Asn-54, Asn-64, Asn-70, Asn-77, Asn-83, Asn-106, and Asn-114 are each glycosylated (N-linked (GlcNAc...) asparagine).

The protein belongs to the evasin C8 family. In terms of assembly, monomer.

It is found in the secreted. Salivary chemokine-binding protein which has chemokine-neutralizing activity and binds to host chemokines CCL1, CCL3, CCL5, CCL7, CCL8, CCL11, CCL14, CCL15, CCL16, CCL17, CCL18, CCL19, CCL21, CCL22, CCL23, CCL24, CCL25 and CCL26 with nanomolar affinity. Binds to CCL3 and CCL5 with 1:1 stoichiometry. Although binding to CCL25 is observed, does not inhibit CCL25-induced chemotaxis. Has been shown to reduce cardiac injury and inflammation in mice through its anti-CCL5 activity. This is Evasin-4 from Rhipicephalus sanguineus (Brown dog tick).